The following is a 362-amino-acid chain: GDSL esterase/lipase 6 (362 aa).

The first 23 residues, 1–23, serve as a signal peptide directing secretion; the sequence is MSSSSSMDLLMCLLLLISPVVLA. The Nucleophile role is filled by serine 38. Asparagine 50, asparagine 103, asparagine 107, asparagine 195, and asparagine 296 each carry an N-linked (GlcNAc...) asparagine glycan. Catalysis depends on residues aspartate 323 and histidine 326.

The protein belongs to the 'GDSL' lipolytic enzyme family.

Its subcellular location is the secreted. The chain is GDSL esterase/lipase 6 (GLIP6) from Arabidopsis thaliana (Mouse-ear cress).